We begin with the raw amino-acid sequence, 210 residues long: dITP/XTP pyrophosphatase (210 aa).

13 to 18 provides a ligand contact to substrate; that stretch reads THNPGK. Mg(2+)-binding residues include aspartate 45 and aspartate 74. The Proton acceptor role is filled by aspartate 74. Substrate-binding positions include serine 75, 160 to 163, lysine 183, and 195 to 196; these read FGYD and HR.

This sequence belongs to the HAM1 NTPase family. Homodimer. The cofactor is Mg(2+).

The catalysed reaction is XTP + H2O = XMP + diphosphate + H(+). It carries out the reaction dITP + H2O = dIMP + diphosphate + H(+). The enzyme catalyses ITP + H2O = IMP + diphosphate + H(+). In terms of biological role, pyrophosphatase that catalyzes the hydrolysis of nucleoside triphosphates to their monophosphate derivatives, with a high preference for the non-canonical purine nucleotides XTP (xanthosine triphosphate), dITP (deoxyinosine triphosphate) and ITP. Seems to function as a house-cleaning enzyme that removes non-canonical purine nucleotides from the nucleotide pool, thus preventing their incorporation into DNA/RNA and avoiding chromosomal lesions. This chain is dITP/XTP pyrophosphatase, found in Rhodopseudomonas palustris (strain ATCC BAA-98 / CGA009).